The primary structure comprises 176 residues: MAKQTLPYPPGFVEPTTGRVAVMVREYADSDLNGDAPAYWYSAQSEEWGLDPWRLVEGVDPHVGGGSFDVCFASGGTRTVGPLMTFFLSAAHAAQLIDAKGEELALQRATLAVIADGLGLPAKALRIEAKVEGRPAVFYDQDGATLCACAVDSDHWRQARATAATASAIDKARTNF.

The chain is Protein KleF (kleF) from Escherichia coli.